The primary structure comprises 429 residues: Adenylosuccinate synthetase (429 aa).

GTP is bound by residues 12–18 and 40–42; these read GDEGKGK and GHT. Catalysis depends on D13, which acts as the Proton acceptor. Residues D13 and G40 each contribute to the Mg(2+) site. Residues 13-16, 38-41, T128, R142, Q223, T238, and R302 each bind IMP; these read DEGK and NAGH. Catalysis depends on H41, which acts as the Proton donor. Position 298-304 (298-304) interacts with substrate; the sequence is TTTGRPR. GTP is bound by residues R304, 330–332, and 412–414; these read SID and SVG.

The protein belongs to the adenylosuccinate synthetase family. In terms of assembly, homodimer. Mg(2+) serves as cofactor.

The protein localises to the cytoplasm. It catalyses the reaction IMP + L-aspartate + GTP = N(6)-(1,2-dicarboxyethyl)-AMP + GDP + phosphate + 2 H(+). The protein operates within purine metabolism; AMP biosynthesis via de novo pathway; AMP from IMP: step 1/2. In terms of biological role, plays an important role in the de novo pathway of purine nucleotide biosynthesis. Catalyzes the first committed step in the biosynthesis of AMP from IMP. This chain is Adenylosuccinate synthetase, found in Bacillus thuringiensis (strain Al Hakam).